The primary structure comprises 599 residues: Elongation factor 4 (599 aa).

The tr-type G domain occupies 4–186 (KFIRNFSIIA…AIIKHVPPPL (183 aa)). Residues 16 to 21 (DHGKST) and 133 to 136 (NKID) each bind GTP.

The protein belongs to the TRAFAC class translation factor GTPase superfamily. Classic translation factor GTPase family. LepA subfamily.

The protein resides in the cell membrane. The enzyme catalyses GTP + H2O = GDP + phosphate + H(+). Its function is as follows. Required for accurate and efficient protein synthesis under certain stress conditions. May act as a fidelity factor of the translation reaction, by catalyzing a one-codon backward translocation of tRNAs on improperly translocated ribosomes. Back-translocation proceeds from a post-translocation (POST) complex to a pre-translocation (PRE) complex, thus giving elongation factor G a second chance to translocate the tRNAs correctly. Binds to ribosomes in a GTP-dependent manner. In Ureaplasma urealyticum serovar 10 (strain ATCC 33699 / Western), this protein is Elongation factor 4.